We begin with the raw amino-acid sequence, 198 residues long: Na(+)-translocating NADH-quinone reductase subunit E (198 aa).

Transmembrane regions (helical) follow at residues 11–31 (SIFI…FLAV), 39–59 (MGLG…NNLI), 77–97 (FLSF…LEMA), 110–130 (GIFL…SFMV), 140–160 (VVYG…MAGI), and 176–196 (LGIT…FSGI).

This sequence belongs to the NqrDE/RnfAE family. In terms of assembly, composed of six subunits; NqrA, NqrB, NqrC, NqrD, NqrE and NqrF.

It localises to the cell inner membrane. It catalyses the reaction a ubiquinone + n Na(+)(in) + NADH + H(+) = a ubiquinol + n Na(+)(out) + NAD(+). In terms of biological role, NQR complex catalyzes the reduction of ubiquinone-1 to ubiquinol by two successive reactions, coupled with the transport of Na(+) ions from the cytoplasm to the periplasm. NqrA to NqrE are probably involved in the second step, the conversion of ubisemiquinone to ubiquinol. The chain is Na(+)-translocating NADH-quinone reductase subunit E from Aeromonas salmonicida (strain A449).